Reading from the N-terminus, the 467-residue chain is Ribosomal protein uS12 methylthiotransferase RimO (467 aa).

In terms of domain architecture, MTTase N-terminal spans 1–110 (MDLHGCAKNQ…LPQLIDSMFP (110 aa)). The [4Fe-4S] cluster site is built by Cys6, Cys42, Cys73, Cys153, Cys157, and Cys160. The 248-residue stretch at 139–386 (LNFPRSTYIK…QNAQTSITEK (248 aa)) folds into the Radical SAM core domain. The TRAM domain occupies 389 to 467 (DSFIGKEIEV…NGFDLEAVAV (79 aa)).

This sequence belongs to the methylthiotransferase family. RimO subfamily. The cofactor is [4Fe-4S] cluster.

It is found in the cytoplasm. It carries out the reaction L-aspartate(89)-[ribosomal protein uS12]-hydrogen + (sulfur carrier)-SH + AH2 + 2 S-adenosyl-L-methionine = 3-methylsulfanyl-L-aspartate(89)-[ribosomal protein uS12]-hydrogen + (sulfur carrier)-H + 5'-deoxyadenosine + L-methionine + A + S-adenosyl-L-homocysteine + 2 H(+). Functionally, catalyzes the methylthiolation of an aspartic acid residue of ribosomal protein uS12. The protein is Ribosomal protein uS12 methylthiotransferase RimO of Treponema denticola (strain ATCC 35405 / DSM 14222 / CIP 103919 / JCM 8153 / KCTC 15104).